We begin with the raw amino-acid sequence, 95 residues long: uncharacterized protein (95 aa).

This is an uncharacterized protein from Enterobacteria phage T4 (Bacteriophage T4).